A 295-amino-acid polypeptide reads, in one-letter code: Nucleotide-binding protein RD1_1380 (295 aa).

An ATP-binding site is contributed by 16–23 (GPSGAGRS). 63–66 (DPRN) serves as a coordination point for GTP.

Belongs to the RapZ-like family.

Its function is as follows. Displays ATPase and GTPase activities. The chain is Nucleotide-binding protein RD1_1380 from Roseobacter denitrificans (strain ATCC 33942 / OCh 114) (Erythrobacter sp. (strain OCh 114)).